Here is a 215-residue protein sequence, read N- to C-terminus: Pyrrolidone-carboxylate peptidase (215 aa).

Residues E80, C143, and H167 contribute to the active site.

Belongs to the peptidase C15 family. As to quaternary structure, homotetramer.

The protein resides in the cytoplasm. The catalysed reaction is Release of an N-terminal pyroglutamyl group from a polypeptide, the second amino acid generally not being Pro.. Removes 5-oxoproline from various penultimate amino acid residues except L-proline. The protein is Pyrrolidone-carboxylate peptidase of Bacillus cereus (strain ZK / E33L).